Consider the following 432-residue polypeptide: Glutamyl-tRNA reductase (432 aa).

Substrate-binding positions include 49–52 (TCNR), serine 101, 106–108 (EPQ), and glutamine 112. Cysteine 50 (nucleophile) is an active-site residue. 181–186 (GAGETI) serves as a coordination point for NADP(+). Residues 407–432 (FPEKPGYQHPPIATPIVRTDDADPAP) are disordered.

The protein belongs to the glutamyl-tRNA reductase family. As to quaternary structure, homodimer.

The catalysed reaction is (S)-4-amino-5-oxopentanoate + tRNA(Glu) + NADP(+) = L-glutamyl-tRNA(Glu) + NADPH + H(+). The protein operates within porphyrin-containing compound metabolism; protoporphyrin-IX biosynthesis; 5-aminolevulinate from L-glutamyl-tRNA(Glu): step 1/2. Its function is as follows. Catalyzes the NADPH-dependent reduction of glutamyl-tRNA(Glu) to glutamate 1-semialdehyde (GSA). This is Glutamyl-tRNA reductase from Xanthomonas oryzae pv. oryzae (strain PXO99A).